The chain runs to 230 residues: Increased recombination centers protein 19 (230 aa).

This sequence belongs to the IRC19 family.

Functionally, involved in sporulation and maintenance of the mitochondrial DNA. Is probably involved in a pathway contributing to genomic integrity. The protein is Increased recombination centers protein 19 (IRC19) of Saccharomyces cerevisiae (strain ATCC 204508 / S288c) (Baker's yeast).